Here is an 80-residue protein sequence, read N- to C-terminus: Exodeoxyribonuclease 7 small subunit (80 aa).

It belongs to the XseB family. As to quaternary structure, heterooligomer composed of large and small subunits.

The protein resides in the cytoplasm. It catalyses the reaction Exonucleolytic cleavage in either 5'- to 3'- or 3'- to 5'-direction to yield nucleoside 5'-phosphates.. Its function is as follows. Bidirectionally degrades single-stranded DNA into large acid-insoluble oligonucleotides, which are then degraded further into small acid-soluble oligonucleotides. The polypeptide is Exodeoxyribonuclease 7 small subunit (Halalkalibacterium halodurans (strain ATCC BAA-125 / DSM 18197 / FERM 7344 / JCM 9153 / C-125) (Bacillus halodurans)).